The chain runs to 231 residues: ATP-dependent dethiobiotin synthetase BioD 2 (231 aa).

13–18 (SVGKTV) lines the ATP pocket. Threonine 17 contacts Mg(2+). The active site involves lysine 38. Residues aspartate 55, 112-115 (EGTG), 172-173 (NR), 201-203 (PYL), and glutamine 208 contribute to the ATP site. Residues aspartate 55 and glutamate 112 each coordinate Mg(2+).

It belongs to the dethiobiotin synthetase family. In terms of assembly, homodimer. Requires Mg(2+) as cofactor.

The protein resides in the cytoplasm. The enzyme catalyses (7R,8S)-7,8-diammoniononanoate + CO2 + ATP = (4R,5S)-dethiobiotin + ADP + phosphate + 3 H(+). Its pathway is cofactor biosynthesis; biotin biosynthesis; biotin from 7,8-diaminononanoate: step 1/2. Its function is as follows. Catalyzes a mechanistically unusual reaction, the ATP-dependent insertion of CO2 between the N7 and N8 nitrogen atoms of 7,8-diaminopelargonic acid (DAPA, also called 7,8-diammoniononanoate) to form a ureido ring. The protein is ATP-dependent dethiobiotin synthetase BioD 2 of Salmonella typhimurium (strain LT2 / SGSC1412 / ATCC 700720).